A 122-amino-acid polypeptide reads, in one-letter code: Fluoride-specific ion channel FluC (122 aa).

The next 4 membrane-spanning stretches (helical) occupy residues 5-25, 29-49, 65-85, and 93-113; these read FLIG…SGII, FGIP…VGFL, FIIT…YESF, and FIKS…MIYF. Residues Gly72 and Thr75 each coordinate Na(+).

It belongs to the fluoride channel Fluc/FEX (TC 1.A.43) family.

It localises to the cell membrane. The enzyme catalyses fluoride(in) = fluoride(out). With respect to regulation, na(+) is not transported, but it plays an essential structural role and its presence is essential for fluoride channel function. In terms of biological role, fluoride-specific ion channel. Important for reducing fluoride concentration in the cell, thus reducing its toxicity. This Methanococcus vannielii (strain ATCC 35089 / DSM 1224 / JCM 13029 / OCM 148 / SB) protein is Fluoride-specific ion channel FluC.